The following is a 150-amino-acid chain: Large ribosomal subunit protein bL9 (150 aa).

This sequence belongs to the bacterial ribosomal protein bL9 family.

Its function is as follows. Binds to the 23S rRNA. This Lactococcus lactis subsp. cremoris (strain SK11) protein is Large ribosomal subunit protein bL9.